Reading from the N-terminus, the 80-residue chain is Small ribosomal subunit protein uS17 (80 aa).

The protein belongs to the universal ribosomal protein uS17 family. As to quaternary structure, part of the 30S ribosomal subunit.

In terms of biological role, one of the primary rRNA binding proteins, it binds specifically to the 5'-end of 16S ribosomal RNA. The protein is Small ribosomal subunit protein uS17 of Chelativorans sp. (strain BNC1).